A 274-amino-acid polypeptide reads, in one-letter code: Large ribosomal subunit protein uL2 (274 aa).

The tract at residues 221-256 (RGTAMNPVDHPHGGGEGRNFGKHPVTPWGVPTKGYK) is disordered.

It belongs to the universal ribosomal protein uL2 family. As to quaternary structure, part of the 50S ribosomal subunit. Forms a bridge to the 30S subunit in the 70S ribosome.

Its function is as follows. One of the primary rRNA binding proteins. Required for association of the 30S and 50S subunits to form the 70S ribosome, for tRNA binding and peptide bond formation. It has been suggested to have peptidyltransferase activity; this is somewhat controversial. Makes several contacts with the 16S rRNA in the 70S ribosome. This is Large ribosomal subunit protein uL2 from Hahella chejuensis (strain KCTC 2396).